Consider the following 87-residue polypeptide: Small ribosomal subunit protein uS15 (87 aa).

This sequence belongs to the universal ribosomal protein uS15 family. In terms of assembly, part of the 30S ribosomal subunit. Forms a bridge to the 50S subunit in the 70S ribosome, contacting the 23S rRNA.

One of the primary rRNA binding proteins, it binds directly to 16S rRNA where it helps nucleate assembly of the platform of the 30S subunit by binding and bridging several RNA helices of the 16S rRNA. Functionally, forms an intersubunit bridge (bridge B4) with the 23S rRNA of the 50S subunit in the ribosome. The polypeptide is Small ribosomal subunit protein uS15 (Alkaliphilus oremlandii (strain OhILAs) (Clostridium oremlandii (strain OhILAs))).